Here is a 189-residue protein sequence, read N- to C-terminus: dTTP/UTP pyrophosphatase (189 aa).

Asp-64 functions as the Proton acceptor in the catalytic mechanism.

The protein belongs to the Maf family. YhdE subfamily. Requires a divalent metal cation as cofactor.

The protein localises to the cytoplasm. The catalysed reaction is dTTP + H2O = dTMP + diphosphate + H(+). It carries out the reaction UTP + H2O = UMP + diphosphate + H(+). In terms of biological role, nucleoside triphosphate pyrophosphatase that hydrolyzes dTTP and UTP. May have a dual role in cell division arrest and in preventing the incorporation of modified nucleotides into cellular nucleic acids. The polypeptide is dTTP/UTP pyrophosphatase (Syntrophomonas wolfei subsp. wolfei (strain DSM 2245B / Goettingen)).